We begin with the raw amino-acid sequence, 459 residues long: 23S rRNA (uracil-C(5))-methyltransferase RlmCD (459 aa).

Residues 6–64 form the TRAM domain; the sequence is PVEKNEYYDVTFEDLTHEGAGVAKVQGFPIFVPNALPEEKAQIKVTRVKKGFAFGRLIE. [4Fe-4S] cluster-binding residues include Cys-77, Cys-83, Cys-86, and Cys-166. Residues Gln-290, Tyr-319, Glu-340, and Asp-388 each coordinate S-adenosyl-L-methionine. Catalysis depends on Cys-415, which acts as the Nucleophile.

The protein belongs to the class I-like SAM-binding methyltransferase superfamily. RNA M5U methyltransferase family.

The enzyme catalyses uridine(747) in 23S rRNA + S-adenosyl-L-methionine = 5-methyluridine(747) in 23S rRNA + S-adenosyl-L-homocysteine + H(+). It catalyses the reaction uridine(1939) in 23S rRNA + S-adenosyl-L-methionine = 5-methyluridine(1939) in 23S rRNA + S-adenosyl-L-homocysteine + H(+). Functionally, catalyzes the formation of 5-methyl-uridine at positions 747 (m5U747) and 1939 (m5U1939) in 23S rRNA. In Bacillus subtilis (strain 168), this protein is 23S rRNA (uracil-C(5))-methyltransferase RlmCD (rlmCD).